The primary structure comprises 284 residues: UPF0276 protein PA3283 (284 aa).

It belongs to the UPF0276 family.

This Pseudomonas aeruginosa (strain ATCC 15692 / DSM 22644 / CIP 104116 / JCM 14847 / LMG 12228 / 1C / PRS 101 / PAO1) protein is UPF0276 protein PA3283.